We begin with the raw amino-acid sequence, 490 residues long: Ribulose bisphosphate carboxylase large chain (490 aa).

Substrate-binding residues include N127 and T177. Catalysis depends on K179, which acts as the Proton acceptor. Residue K181 coordinates substrate. K205, D207, and E208 together coordinate Mg(2+). N6-carboxylysine is present on K205. The active-site Proton acceptor is H297. Substrate-binding residues include R298, H330, and S382.

This sequence belongs to the RuBisCO large chain family. Type I subfamily. Heterohexadecamer of 8 large chains and 8 small chains. Mg(2+) is required as a cofactor.

It localises to the plastid. It is found in the chloroplast. It carries out the reaction 2 (2R)-3-phosphoglycerate + 2 H(+) = D-ribulose 1,5-bisphosphate + CO2 + H2O. It catalyses the reaction D-ribulose 1,5-bisphosphate + O2 = 2-phosphoglycolate + (2R)-3-phosphoglycerate + 2 H(+). Its function is as follows. RuBisCO catalyzes two reactions: the carboxylation of D-ribulose 1,5-bisphosphate, the primary event in carbon dioxide fixation, as well as the oxidative fragmentation of the pentose substrate in the photorespiration process. Both reactions occur simultaneously and in competition at the same active site. In Thalassiosira pseudonana (Marine diatom), this protein is Ribulose bisphosphate carboxylase large chain.